The primary structure comprises 164 residues: T-cell surface glycoprotein CD3 zeta chain (164 aa).

A signal peptide spans 1–21 (MKWKALFTAAILQAQLPITEA). The Extracellular portion of the chain corresponds to 22–30 (QSFGLLDPK). A helical membrane pass occupies residues 31–51 (LCYLLDGILFIYGVILTALFL). Residues 52–164 (RVKFSRSADA…ALHMQALPPR (113 aa)) are Cytoplasmic-facing. Ser58 is subject to Phosphoserine. ITAM domains lie at 61–89 (APAY…LDKR), 100–128 (PQRR…EIGM), and 131–159 (ERRR…LHMQ). Phosphotyrosine is present on residues Tyr64, Tyr72, Tyr83, Tyr111, Tyr123, Tyr142, and Tyr153. Over residues 83–96 (YDVLDKRRGRDPEM) the composition is skewed to basic and acidic residues. Residues 83–111 (YDVLDKRRGRDPEMGGKPQRRKNPQEGLY) form a disordered region. The interval 128–154 (MKGERRRGKGHDGLYQGLSTATKDTYD) is disordered.

Belongs to the CD3Z/FCER1G family. As to quaternary structure, the TCR-CD3 complex is composed of a CD3D/CD3E and a CD3G/CD3E heterodimers that preferentially associate with TCRalpha and TCRbeta, respectively, to form TCRalpha/CD3E/CD3G and TCRbeta/CD3G/CD3E trimers. In turn, the hexamer interacts with CD3Z homodimer to form the TCR-CD3 complex. Alternatively, TCRalpha and TCRbeta can be replaced by TCRgamma and TCRdelta. Interacts with SLA. Interacts with TRAT1. Interacts with DOCK2. Interacts with SLA2. Interacts with SHB. Interacts with ZAP70. Interacts (tyrosine phosphorylated) with SHC1 (via SH2 domain). Interacts with PTPRC. Interacts with CRK; this interaction regulates CD3Z phosphorylation. Interacts (on T cell side) with CD81, ICAM1 and CD9 at immunological synapses between antigen-presenting cells and T cells. Interacts with CD160. Interacts with LY6E. The signaling subunit of immunoglobulin gamma (IgG) Fc receptor complex. As a homodimer or a heterodimer with FCER1G, associates with the ligand binding subunit FCGR3A (via transmembrane domain); this interaction is a prerequisite for Fc receptor complex expression on the cell surface. Interacts with CD5. In terms of assembly, (Microbial infection) Interacts with HIV-1 Nef; this interaction up-regulates the expression of the Fas ligand (FASLG) at the cell surface. (Microbial infection) Interacts with HIV-2 Nef protein; this interaction induces down-regulation of cell surface TCR/CD3 complexes. Post-translationally, phosphorylated on Tyr residues after T-cell receptor triggering by LCK in association with CD4/CD8. CD3Z is expressed in normal lymphoid tissue and in peripheral blood mononuclear cells (PBMCs).

It is found in the cell membrane. Its function is as follows. Part of the TCR-CD3 complex present on T-lymphocyte cell surface that plays an essential role in adaptive immune response. When antigen presenting cells (APCs) activate T-cell receptor (TCR), TCR-mediated signals are transmitted across the cell membrane by the CD3 chains CD3D, CD3E, CD3G and CD3Z. All CD3 chains contain immunoreceptor tyrosine-based activation motifs (ITAMs) in their cytoplasmic domain. Upon TCR engagement, these motifs become phosphorylated by Src family protein tyrosine kinases LCK and FYN, resulting in the activation of downstream signaling pathways. CD3Z ITAMs phosphorylation creates multiple docking sites for the protein kinase ZAP70 leading to ZAP70 phosphorylation and its conversion into a catalytically active enzyme. Plays an important role in intrathymic T-cell differentiation. Additionally, participates in the activity-dependent synapse formation of retinal ganglion cells (RGCs) in both the retina and dorsal lateral geniculate nucleus (dLGN). This chain is T-cell surface glycoprotein CD3 zeta chain (CD247), found in Homo sapiens (Human).